Consider the following 278-residue polypeptide: Elongation factor Ts (278 aa).

The involved in Mg(2+) ion dislocation from EF-Tu stretch occupies residues 80–83; the sequence is TDFV.

This sequence belongs to the EF-Ts family.

The protein localises to the cytoplasm. Functionally, associates with the EF-Tu.GDP complex and induces the exchange of GDP to GTP. It remains bound to the aminoacyl-tRNA.EF-Tu.GTP complex up to the GTP hydrolysis stage on the ribosome. In Renibacterium salmoninarum (strain ATCC 33209 / DSM 20767 / JCM 11484 / NBRC 15589 / NCIMB 2235), this protein is Elongation factor Ts.